The primary structure comprises 1770 residues: Probable outer membrane protein PmpC (1770 aa).

The N-terminal stretch at 1-20 is a signal peptide; it reads MKFMSATAVFAAALSSVTEA. Disordered regions lie at residues 73 to 109, 264 to 311, 481 to 505, 611 to 818, and 1271 to 1329; these read LPRK…ELDN, EDTL…GKGG, PAAP…TNSD, ESTP…STTE, and LRII…TSRT. Positions 85 to 97 are enriched in low complexity; that stretch reads SPTTEGVSSSSSG. Polar residues predominate over residues 268–285; sequence DSTPETEQTESNGNQDGS. Composition is skewed to low complexity over residues 294-303 and 496-505; these read SESPESTPSP and QTETSDTNSD. Composition is skewed to polar residues over residues 631–675 and 682–703; these read TEDP…TGNA and QDST…QSNE. 2 stretches are compositionally biased toward low complexity: residues 719 to 748 and 762 to 802; these read ESVS…GDQS and STDS…GDSA. Over residues 1303–1319 the composition is skewed to polar residues; the sequence is NNDASNQGESANGSSSP. Residues 1477-1770 form the Autotransporter domain; it reads EEVSYNNLWI…MMNCGARMTF (294 aa).

This sequence belongs to the PMP outer membrane protein family.

It localises to the secreted. The protein resides in the cell wall. Its subcellular location is the cell outer membrane. In Chlamydia trachomatis serovar D (strain ATCC VR-885 / DSM 19411 / UW-3/Cx), this protein is Probable outer membrane protein PmpC (pmpC).